A 613-amino-acid polypeptide reads, in one-letter code: Protein ECM3 (613 aa).

4 helical membrane passes run 10 to 30 (IWASVRPIIKIYLIIGVGFGL), 74 to 94 (GIICLTSVILFATGLGFAFIV), 106 to 126 (GGILAGGMFPNISDLPIAYLQ), and 143 to 163 (VANVIIFLAMFLICVFNLGGF). The segment at 177 to 256 (DEENTLTNDD…PAIDDRSSNS (80 aa)) is disordered. Polar residues-rich tracts occupy residues 187–206 (SAQQPTQPIEGNSSSSSNQD) and 213–226 (ESTVPNSSQASYIS). 2 positions are modified to phosphoserine: Ser-291 and Ser-338. The segment at 345 to 366 (RRRKSSISSQGAPSVLQADGTI) is disordered. The next 4 membrane-spanning stretches (helical) occupy residues 432-452 (MAVILALIIAFIPWVKALFVT), 471-491 (FIMDFTSYVGAASVPFGLILL), 546-566 (MLLFVTAITWNLPTMTTLIYF), and 587-607 (FLMLQYPLMVVSLPFLVSYFI).

The protein resides in the endoplasmic reticulum membrane. Functionally, may be involved in cell wall organization and biogenesis. The chain is Protein ECM3 (ECM3) from Saccharomyces cerevisiae (strain ATCC 204508 / S288c) (Baker's yeast).